The chain runs to 62 residues: Large ribosomal subunit protein uL30 (62 aa).

It belongs to the universal ribosomal protein uL30 family. As to quaternary structure, part of the 50S ribosomal subunit.

The protein is Large ribosomal subunit protein uL30 of Kosmotoga olearia (strain ATCC BAA-1733 / DSM 21960 / TBF 19.5.1).